Here is a 527-residue protein sequence, read N- to C-terminus: Peptide chain release factor 3 (527 aa).

The 269-residue stretch at 9–277 (AKRRTFAIIS…AVVDWAPRPL (269 aa)) folds into the tr-type G domain. Residues 18 to 25 (SHPDAGKT), 86 to 90 (DTPGH), and 140 to 143 (NKLD) contribute to the GTP site.

It belongs to the TRAFAC class translation factor GTPase superfamily. Classic translation factor GTPase family. PrfC subfamily.

It localises to the cytoplasm. In terms of biological role, increases the formation of ribosomal termination complexes and stimulates activities of RF-1 and RF-2. It binds guanine nucleotides and has strong preference for UGA stop codons. It may interact directly with the ribosome. The stimulation of RF-1 and RF-2 is significantly reduced by GTP and GDP, but not by GMP. The protein is Peptide chain release factor 3 of Pseudomonas putida (strain ATCC 47054 / DSM 6125 / CFBP 8728 / NCIMB 11950 / KT2440).